A 91-amino-acid polypeptide reads, in one-letter code: DNA-directed RNA polymerase subunit omega (91 aa).

The protein belongs to the RNA polymerase subunit omega family. In terms of assembly, the RNAP catalytic core consists of 2 alpha, 1 beta, 1 beta' and 1 omega subunit. When a sigma factor is associated with the core the holoenzyme is formed, which can initiate transcription.

The catalysed reaction is RNA(n) + a ribonucleoside 5'-triphosphate = RNA(n+1) + diphosphate. Functionally, promotes RNA polymerase assembly. Latches the N- and C-terminal regions of the beta' subunit thereby facilitating its interaction with the beta and alpha subunits. The protein is DNA-directed RNA polymerase subunit omega of Nocardia farcinica (strain IFM 10152).